The following is a 2370-amino-acid chain: Genome polyprotein (2370 aa).

Glycine 112 carries N-myristoyl glycine; by host lipidation. 2 disordered regions span residues 140-173 (VGDM…GNVV) and 704-736 (GADG…FDYP). Residues 154–171 (GSNKGGSSTSPKSTSNGN) are compositionally biased toward low complexity. Residues 713-725 (APTSDLSDGNPTT) show a composition bias toward polar residues. One can recognise an SF3 helicase domain in the interval 1358 to 1522 (YSTALSAISL…AAFSAAAALK (165 aa)). 1384–1391 (GPPGTGKS) is a binding site for ATP. Glycine 1597 carries the N-myristoyl glycine; by host lipid modification. The helical transmembrane segment at 1646 to 1666 (IFAASSFLSLIAATLTIVRCL) threads the bilayer. A disordered region spans residues 1674–1696 (GAYSGTPVPKPRKKDLPKQPVYS). Tyrosine 1676 bears the O-(5'-phospho-RNA)-tyrosine mark. Residues 1697–1886 (GPVRRQGFDP…FSARLTPERV (190 aa)) form the Peptidase C3 domain. Residues histidine 1745, glutamate 1776, and cysteine 1849 each act as for protease 3C activity in the active site. Positions 2007 to 2016 (SPGYPWTTQG) are enriched in polar residues. The disordered stretch occupies residues 2007-2026 (SPGYPWTTQGRSRRSLFDED). The RdRp catalytic domain occupies 2122 to 2239 (SNVWSIDYSC…GSNQDFHPRE (118 aa)). Catalysis depends on for RdRp activity residues aspartate 2128 and aspartate 2225.

As to quaternary structure, interacts with capsid protein VP1. Interacts with capsid protein VP3. In terms of assembly, interacts with capsid protein VP0. Interacts with capsid protein VP3. Interacts with capsid protein VP0. Interacts with capsid protein VP1. As to quaternary structure, homodimer. Interacts with protein 2B. Interacts with protein 2C. In terms of assembly, homodimer. Interacts with host ABCD3. Interacts with protein 2A. Interacts with host ACBD3. Homodimer. Interacts with host ABCD3. Interacts with protein 2A. Interacts with protein 3A. Interacts with protein 3C. Interacts with host ACBD3. As to quaternary structure, homodimer. Interacts with host ABCD3 (via GOLD domain) and PI4KB; these interactions allow the formation of a viral protein/ACBD3/PI4KB complex in order to synthesize PI4P at the viral RNA replication sites. Interacts with protein 2C. Interacts with protein 3C. Protein 3C: Interacts with protein 2A. Protein 3C: Interacts with protein 2C. Post-translationally, specific enzymatic cleavages by the viral protease in vivo yield a variety of precursors and mature proteins. The leader protein-VP0 junction is cleaved by 3C proteinase. The VP1/2A junction is cleaved by the protein 3CD in association with protein 2A. Uridylylated by the polymerase and is covalently linked to the 5'-end of genomic RNA. This uridylylated form acts as a nucleotide-peptide primer for the polymerase.

Its subcellular location is the virion. The protein resides in the host cytoplasm. It is found in the host cytoplasmic vesicle membrane. It localises to the host Golgi apparatus membrane. The enzyme catalyses RNA(n) + a ribonucleoside 5'-triphosphate = RNA(n+1) + diphosphate. It catalyses the reaction Selective cleavage of Gln-|-Gly bond in the poliovirus polyprotein. In other picornavirus reactions Glu may be substituted for Gln, and Ser or Thr for Gly.. It carries out the reaction ATP + H2O = ADP + phosphate + H(+). Required for viral RNA replication and viral RNA encapsidation. Does not have any proteolytic activity. In terms of biological role, forms an icosahedral capsid of pseudo T=3 symmetry with capsid proteins VP0 and VP3. Together they form an icosahedral capsid composed of 60 copies of each VP0, VP1, and VP3. All the three latter proteins contain a beta-sheet structure called beta-barrel jelly roll. Its function is as follows. Forms an icosahedral capsid of pseudo T=3 symmetry with capsid proteins VP1 and VP3. Together they form an icosahedral capsid composed of 60 copies of each VP0, VP1, and VP3. All the three latter proteins contain a beta-sheet structure called beta-barrel jelly roll. Functionally, forms an icosahedral capsid of pseudo T=3 symmetry with capsid proteins VP0 and VP1. Together they form an icosahedral capsid composed of 60 copies of each VP0, VP1, and VP3. All the three latter proteins contain a beta-sheet structure called beta-barrel jelly roll. Required for viral RNA replication. Does not have any proteolytic activity. In terms of biological role, affects membrane integrity and causes an increase in membrane permeability. Its function is as follows. Induces and associates with structural rearrangements of intracellular membranes. Displays RNA-binding, nucleotide binding and NTPase activities. May play a role in virion morphogenesis and viral RNA encapsidation by interacting with the capsid protein VP3. Functionally, serves as membrane anchor via its hydrophobic domain. Plays an essential role in viral RNA replication by recruiting PI4KB at the viral replication sites, thereby allowing the formation of rearranged membranous structures where viral replication takes place. Forms a primer, VPg-pU, which is utilized by the polymerase for the initiation of RNA chains. In terms of biological role, cysteine protease that generates mature viral proteins from the precursor polyprotein. In addition to its proteolytic activity, it binds to viral RNA, and thus influences viral genome replication. RNA and substrate cooperatively bind to the protease. Its function is as follows. Replicates the genomic and antigenomic RNAs by recognizing replications specific signals. Performs VPg uridylylation. This Homo sapiens (Human) protein is Genome polyprotein.